The sequence spans 414 residues: CinA-like protein (414 aa).

The protein belongs to the CinA family.

This chain is CinA-like protein, found in Citrifermentans bemidjiense (strain ATCC BAA-1014 / DSM 16622 / JCM 12645 / Bem) (Geobacter bemidjiensis).